The sequence spans 464 residues: Glycine receptor subunit alpha-3 (464 aa).

The first 33 residues, 1–33 (MAHVRHFRTLLSGFYFWEAALLLSLVATKETNS), serve as a signal peptide directing secretion. The Extracellular segment spans residues 34 to 255 (ARSRSAPMSP…RFHLERQMGY (222 aa)). The N-linked (GlcNAc...) asparagine glycan is linked to N71. An intrachain disulfide couples C171 to C185. 2 residues coordinate Zn(2+): E225 and D227. A disulfide bridge links C231 with C242. Residue 235–240 (YNTGKF) participates in strychnine binding. A Zn(2+)-binding site is contributed by H248. Residues 256–277 (YLIQMYIPSLLIVILSWVSFWI) traverse the membrane as a helical segment. Residues 278–282 (NMDAA) are Cytoplasmic-facing. A helical membrane pass occupies residues 283–303 (PARVALGITTVLTMTTQSSGS). At 304–314 (RASLPKVSYVK) the chain is on the extracellular side. A helical transmembrane segment spans residues 315–335 (AIDIWMAVCLLFVFSALLEYA). The Cytoplasmic portion of the chain corresponds to 336–430 (AVNFVSRQHK…FIDRAKKIDT (95 aa)). The residue at position 370 (S370) is a Phosphoserine. S379 is modified (phosphoserine; by PKA). The chain crosses the membrane as a helical span at residues 431–451 (ISRACFPLAFLIFNIFYWVIY). The Extracellular portion of the chain corresponds to 452-464 (KILRHEDIHHQQD).

Belongs to the ligand-gated ion channel (TC 1.A.9) family. Glycine receptor (TC 1.A.9.3) subfamily. GLRA3 sub-subfamily. Homopentamer (in vitro). Heteropentamer composed of GLRA3 and GLRB. Both homopentamers and heteropentamers form functional ion channels, but their characteristics are subtly different. In terms of processing, phosphorylated by PKA; this causes down-regulation of channel activity.

It localises to the postsynaptic cell membrane. The protein resides in the perikaryon. The protein localises to the cell projection. Its subcellular location is the dendrite. It is found in the synapse. It localises to the cell membrane. It carries out the reaction chloride(in) = chloride(out). Its activity is regulated as follows. Low levels of Zn(2+) ions (1 uM) increase glycine sensitivity and decrease the glycine concentration required for half-maximal channel activity. Channel activity is strongly enhanced by ethanol. Inhibited by picrotoxin. Inhibited by prostaglandin E2, probably via PKA-mediated phosphorylation at Ser-379. In terms of biological role, glycine receptors are ligand-gated chloride channels. Channel opening is triggered by extracellular glycine. Channel characteristics depend on the subunit composition; heteropentameric channels display faster channel closure. Plays an important role in the down-regulation of neuronal excitability. Contributes to the generation of inhibitory postsynaptic currents. Contributes to increased pain perception in response to increased prostaglandin E2 levels. Plays a role in cellular responses to ethanol. In Rattus norvegicus (Rat), this protein is Glycine receptor subunit alpha-3 (Glra3).